We begin with the raw amino-acid sequence, 201 residues long: Large ribosomal subunit protein uL4 (201 aa).

The interval 39–72 (KRQGTSAQKSRSEVIGSGKKPWRQKGTGRARAGS) is disordered.

Belongs to the universal ribosomal protein uL4 family. Part of the 50S ribosomal subunit.

Functionally, one of the primary rRNA binding proteins, this protein initially binds near the 5'-end of the 23S rRNA. It is important during the early stages of 50S assembly. It makes multiple contacts with different domains of the 23S rRNA in the assembled 50S subunit and ribosome. Its function is as follows. Forms part of the polypeptide exit tunnel. This chain is Large ribosomal subunit protein uL4, found in Wigglesworthia glossinidia brevipalpis.